The chain runs to 92 residues: Integration host factor subunit beta (92 aa).

This sequence belongs to the bacterial histone-like protein family. As to quaternary structure, heterodimer of an alpha and a beta chain.

Functionally, this protein is one of the two subunits of integration host factor, a specific DNA-binding protein that functions in genetic recombination as well as in transcriptional and translational control. In Vibrio cholerae serotype O1 (strain ATCC 39541 / Classical Ogawa 395 / O395), this protein is Integration host factor subunit beta.